The chain runs to 242 residues: uncharacterized protein (242 aa).

This sequence belongs to the MtxX family.

This is an uncharacterized protein from Methanothermobacter thermautotrophicus (strain ATCC 29096 / DSM 1053 / JCM 10044 / NBRC 100330 / Delta H) (Methanobacterium thermoautotrophicum).